Consider the following 148-residue polypeptide: 3-dehydroquinate dehydratase (148 aa).

The active-site Proton acceptor is tyrosine 26. The substrate site is built by asparagine 77, histidine 83, and aspartate 90. Histidine 103 (proton donor) is an active-site residue. Residues leucine 104–serine 105 and arginine 114 contribute to the substrate site.

The protein belongs to the type-II 3-dehydroquinase family. Homododecamer.

It carries out the reaction 3-dehydroquinate = 3-dehydroshikimate + H2O. It participates in metabolic intermediate biosynthesis; chorismate biosynthesis; chorismate from D-erythrose 4-phosphate and phosphoenolpyruvate: step 3/7. In terms of biological role, catalyzes a trans-dehydration via an enolate intermediate. In Chlorobaculum tepidum (strain ATCC 49652 / DSM 12025 / NBRC 103806 / TLS) (Chlorobium tepidum), this protein is 3-dehydroquinate dehydratase.